The primary structure comprises 138 residues: von Willebrand factor C domain-containing protein 2-like (138 aa).

A signal peptide spans 1-21 (MALHIHEACILLLVIPGLVTS). The VWFC domain maps to 51–110 (KGCVDDSGFVYKLGERFFPGHSNCPCVCALDGPVCDQPECPKIHPKCTKVEHNGCCPECK).

Peripherally associated with AMPAR complex. AMPAR complex consists of an inner core made of 4 pore-forming GluA/GRIA proteins (GRIA1, GRIA2, GRIA3 and GRIA4) and 4 major auxiliary subunits arranged in a twofold symmetry. One of the two pairs of distinct binding sites is occupied either by CNIH2, CNIH3 or CACNG2, CACNG3. The other harbors CACNG2, CACNG3, CACNG4, CACNG8 or GSG1L. This inner core of AMPAR complex is complemented by outer core constituents binding directly to the GluA/GRIA proteins at sites distinct from the interaction sites of the inner core constituents. Outer core constituents include at least PRRT1, PRRT2, CKAMP44/SHISA9, FRRS1L and NRN1. The proteins of the inner and outer core serve as a platform for other, more peripherally associated AMPAR constituents, including VWC2L. Alone or in combination, these auxiliary subunits control the gating and pharmacology of the AMPAR complex and profoundly impact their biogenesis and protein processing.

Its subcellular location is the secreted. The protein resides in the synapse. Functionally, may play a role in neurogenesis. May play a role in bone differentiation and matrix mineralization. This Macaca fascicularis (Crab-eating macaque) protein is von Willebrand factor C domain-containing protein 2-like (VWC2L).